An 81-amino-acid chain; its full sequence is Short neurotoxin 1 (81 aa).

The first 21 residues, 1–21, serve as a signal peptide directing secretion; sequence MKTLLLTLVVVTIVCLDLGYT. Cystine bridges form between Cys24–Cys43, Cys38–Cys60, Cys62–Cys73, and Cys74–Cys79.

Belongs to the three-finger toxin family. Short-chain subfamily. Type I alpha-neurotoxin sub-subfamily. Expressed by the venom gland.

The protein resides in the secreted. Its function is as follows. Binds to muscle nicotinic acetylcholine receptor (nAChR) and inhibit acetylcholine from binding to the receptor, thereby impairing neuromuscular transmission. In Tropidechis carinatus (Australian rough-scaled snake), this protein is Short neurotoxin 1.